Reading from the N-terminus, the 598-residue chain is Kinesin-like protein klp-3 (598 aa).

2 coiled-coil regions span residues 19–66 (EVEL…FIQG) and 89–118 (GNLS…LETD). Residues 133–155 (ALSRDSSCSVPRSVSPQPTGDVI) form a disordered region. Positions 136–150 (RDSSCSVPRSVSPQP) are enriched in polar residues. The stretch at 170–248 (HWKKLQRCAE…LVELNGNIRV (79 aa)) forms a coiled coil. A Kinesin motor domain is found at 245–565 (NIRVFYRIRP…VNFAEKIGQV (321 aa)). Residue 328–335 (GHTGSGKT) participates in ATP binding. The disordered stretch occupies residues 569-598 (SGTMKREPTRRSMTGISSGQRREIPASPRK).

The protein belongs to the TRAFAC class myosin-kinesin ATPase superfamily. Kinesin family.

It is found in the cytoplasm. The protein resides in the cytoskeleton. The chain is Kinesin-like protein klp-3 (klp-3) from Caenorhabditis elegans.